Consider the following 709-residue polypeptide: Peptidoglycan D,D-transpeptidase FtsI homolog (709 aa).

A helical transmembrane segment spans residues 20–42 (LQGIYYAFLSISTMIKIALDPYS). Serine 341 serves as the catalytic Acyl-ester intermediate.

The protein belongs to the transpeptidase family.

It localises to the plastid. Its subcellular location is the chloroplast membrane. It catalyses the reaction Preferential cleavage: (Ac)2-L-Lys-D-Ala-|-D-Ala. Also transpeptidation of peptidyl-alanyl moieties that are N-acyl substituents of D-alanine.. This chain is Peptidoglycan D,D-transpeptidase FtsI homolog (ftsI), found in Nephroselmis olivacea (Green alga).